A 252-amino-acid chain; its full sequence is 5'-nucleotidase SurE (252 aa).

Positions 8, 9, 39, and 95 each coordinate a divalent metal cation.

This sequence belongs to the SurE nucleotidase family. The cofactor is a divalent metal cation.

The protein resides in the cytoplasm. It carries out the reaction a ribonucleoside 5'-phosphate + H2O = a ribonucleoside + phosphate. In terms of biological role, nucleotidase that shows phosphatase activity on nucleoside 5'-monophosphates. The chain is 5'-nucleotidase SurE from Thermoanaerobacter sp. (strain X514).